Here is a 281-residue protein sequence, read N- to C-terminus: Phosphoglycerate mutase-like protein AT74H (281 aa).

The Tele-phosphohistidine intermediate role is filled by His17. The active-site Proton donor/acceptor is Glu109.

This sequence belongs to the phosphoglycerate mutase family.

Functionally, may play a role in carbohydrates metabolism. This chain is Phosphoglycerate mutase-like protein AT74H, found in Arabidopsis thaliana (Mouse-ear cress).